The sequence spans 156 residues: Ribosomal RNA large subunit methyltransferase H (156 aa).

Residues Leu73, Gly104, and 123–128 each bind S-adenosyl-L-methionine; that span reads LSALTL.

The protein belongs to the RNA methyltransferase RlmH family. Homodimer.

Its subcellular location is the cytoplasm. It catalyses the reaction pseudouridine(1915) in 23S rRNA + S-adenosyl-L-methionine = N(3)-methylpseudouridine(1915) in 23S rRNA + S-adenosyl-L-homocysteine + H(+). Specifically methylates the pseudouridine at position 1915 (m3Psi1915) in 23S rRNA. This Shewanella pealeana (strain ATCC 700345 / ANG-SQ1) protein is Ribosomal RNA large subunit methyltransferase H.